The following is a 243-amino-acid chain: 7-carboxy-7-deazaguanine synthase (243 aa).

Residues 9–11 (IMG) and Arg-24 contribute to the substrate site. Residues 15–243 (YIGRRFIFVR…IQMHKYLGML (229 aa)) enclose the Radical SAM core domain. Residues Cys-28, Cys-32, and Cys-35 each contribute to the [4Fe-4S] cluster site. Thr-84 is a substrate binding site. S-adenosyl-L-methionine is bound at residue Gly-86.

The protein belongs to the radical SAM superfamily. 7-carboxy-7-deazaguanine synthase family. Homodimer. It depends on [4Fe-4S] cluster as a cofactor. Requires S-adenosyl-L-methionine as cofactor. Mg(2+) serves as cofactor.

It carries out the reaction 6-carboxy-5,6,7,8-tetrahydropterin + H(+) = 7-carboxy-7-deazaguanine + NH4(+). Its pathway is purine metabolism; 7-cyano-7-deazaguanine biosynthesis. Its function is as follows. Catalyzes the complex heterocyclic radical-mediated conversion of 6-carboxy-5,6,7,8-tetrahydropterin (CPH4) to 7-carboxy-7-deazaguanine (CDG), a step common to the biosynthetic pathways of all 7-deazapurine-containing compounds. The protein is 7-carboxy-7-deazaguanine synthase of Methanocaldococcus jannaschii (strain ATCC 43067 / DSM 2661 / JAL-1 / JCM 10045 / NBRC 100440) (Methanococcus jannaschii).